The chain runs to 185 residues: Elongation factor P (185 aa).

The protein belongs to the elongation factor P family.

Its subcellular location is the cytoplasm. It participates in protein biosynthesis; polypeptide chain elongation. Functionally, involved in peptide bond synthesis. Stimulates efficient translation and peptide-bond synthesis on native or reconstituted 70S ribosomes in vitro. Probably functions indirectly by altering the affinity of the ribosome for aminoacyl-tRNA, thus increasing their reactivity as acceptors for peptidyl transferase. The sequence is that of Elongation factor P from Desulfitobacterium hafniense (strain DSM 10664 / DCB-2).